The chain runs to 271 residues: Putative phosphoenolpyruvate synthase regulatory protein (271 aa).

Residue 152–159 (GVSRSGKT) participates in ADP binding.

This sequence belongs to the pyruvate, phosphate/water dikinase regulatory protein family. PSRP subfamily.

It carries out the reaction [pyruvate, water dikinase] + ADP = [pyruvate, water dikinase]-phosphate + AMP + H(+). The enzyme catalyses [pyruvate, water dikinase]-phosphate + phosphate + H(+) = [pyruvate, water dikinase] + diphosphate. Bifunctional serine/threonine kinase and phosphorylase involved in the regulation of the phosphoenolpyruvate synthase (PEPS) by catalyzing its phosphorylation/dephosphorylation. The polypeptide is Putative phosphoenolpyruvate synthase regulatory protein (Thiocapsa roseopersicina).